The sequence spans 115 residues: MGTRLLCWVAFCLLVEELIEAGVVQSPRYKIIEKKQPVAFWCNPISGHNTLYWYLQNLGQGPELLIRYENEEAVDDSQLPKDRFSAERLKGVDSTLKIQPAELGDSAVYLCASSL.

An N-terminal signal peptide occupies residues 1 to 21; the sequence is MGTRLLCWVAFCLLVEELIEA. One can recognise an Ig-like domain in the interval 22–115; sequence GVVQSPRYKI…SAVYLCASSL (94 aa). Cys42 and Cys111 are disulfide-bonded.

Alpha-beta TR is a heterodimer composed of an alpha and beta chain; disulfide-linked. The alpha-beta TR is associated with the transmembrane signaling CD3 coreceptor proteins to form the TR-CD3 (TcR or TCR). The assembly of alpha-beta TR heterodimers with CD3 occurs in the endoplasmic reticulum where a single alpha-beta TR heterodimer associates with one CD3D-CD3E heterodimer, one CD3G-CD3E heterodimer and one CD247 homodimer forming a stable octameric structure. CD3D-CD3E and CD3G-CD3E heterodimers preferentially associate with TR alpha and TR beta chains, respectively. The association of the CD247 homodimer is the last step of TcR assembly in the endoplasmic reticulum and is required for transport to the cell surface.

It localises to the cell membrane. V region of the variable domain of T cell receptor (TR) beta chain that participates in the antigen recognition. Alpha-beta T cell receptors are antigen specific receptors which are essential to the immune response and are present on the cell surface of T lymphocytes. Recognize peptide-major histocompatibility (MH) (pMH) complexes that are displayed by antigen presenting cells (APC), a prerequisite for efficient T cell adaptive immunity against pathogens. Binding of alpha-beta TR to pMH complex initiates TR-CD3 clustering on the cell surface and intracellular activation of LCK that phosphorylates the ITAM motifs of CD3G, CD3D, CD3E and CD247 enabling the recruitment of ZAP70. In turn ZAP70 phosphorylates LAT, which recruits numerous signaling molecules to form the LAT signalosome. The LAT signalosome propagates signal branching to three major signaling pathways, the calcium, the mitogen-activated protein kinase (MAPK) kinase and the nuclear factor NF-kappa-B (NF-kB) pathways, leading to the mobilization of transcription factors that are critical for gene expression and essential for T cell growth and differentiation. The T cell repertoire is generated in the thymus, by V-(D)-J rearrangement. This repertoire is then shaped by intrathymic selection events to generate a peripheral T cell pool of self-MH restricted, non-autoaggressive T cells. Post-thymic interaction of alpha-beta TR with the pMH complexes shapes TR structural and functional avidity. The chain is T cell receptor beta variable 11-3 from Homo sapiens (Human).